The sequence spans 977 residues: MTIQAHKRTLSEVSTSSVGQLKRREGYTEDYTDEGSDIDMPEYVTDSANNQQWQDTISRVVQSVVSVHFAQVAPFDCESALVSEATGFVVDAKLGIILTNRHVVGAGPFSGYAVFDNHEECDVIPIYRDPVHDFGFLKFDPSTIKYMNVQALELKPALAKVGSEIRVVGNDAGEKLSILAGFISRVDRNAPDYGELTYNDFNTEYIQAAAAASGGSSGSPVVNIDGYAVALQAGGSTEASTDFFLPLDRILRALRCIQGSQPITRGTIQTQWLLKPYDECRRMGLSPESEAKAREQFPGKIGLLVAETILREGPADKSIKEGDILISINGQMICSFIQVDAILDENVGKPITLVVQRSGIDITVECTVGDLHAITPSRYVEVCGATFNELSYQMARYYAIPVRAVFLSSATGSFCFDTKEKLGWIVDEVNNQPTPTLDTFIEVMSTIPDCSRVTVQYHHLVDQHSPHVTTVYIDRHWCNEFRIFERNDETGIWDYKNLADPIPALPLKPQTAKFIDLPISNPKLARLARMLVMVSTIGPVPLDSVDPEPRKAAGLVLDAKQGYVIVSRRIVPHDCMDVFVTIAESVLVPASVVFLHPTQNYVIVKYDPAQVQAAVETPILSTERLKRGDKVQFVGYTHNFRSVSSETTVTDISSLSIPSNMVPRYRATNLEAISIESSVGSRCHSGILADDDGTVRALWLSFLGEKQDEKDKIYLMGLDLVDIGEVVEVLKKGKIPRVNIVDSGFGSISVLQARLRGVPEEWIKRMESESENRLQFITVTRVSYTDEEQKLVSGDIILSVNDQLVKQMRDLEGIVTTTDVPAVQQVLRFKIVRKGSIMDLDIKTIEVEETSKIVIFAGCILQAPHHAVRQAMLNIPSGVYCTFRGQSSPAIQYGISSTNFITHVNEIETPDLDRFLEVVRTIPDNTYCKIRLVTFDNVPFAISLKTNYHYFPTSELSRNSDTGRWIEHLCNATPAKN.

Residues 1 to 36 are disordered; sequence MTIQAHKRTLSEVSTSSVGQLKRREGYTEDYTDEGS. The tract at residues 64 to 254 is serine protease; sequence VVSVHFAQVA…LPLDRILRAL (191 aa). Catalysis depends on charge relay system residues H102, D133, and S216. 2 PDZ domains span residues 271 to 356 and 749 to 835; these read QWLL…LVVQ and SVLQ…VRKG.

The protein belongs to the peptidase S1C family.

It localises to the nucleus. Its function is as follows. Nuclear serine protease which mediates apoptosis. The chain is Pro-apoptotic serine protease NMA111 (NMA111) from Eremothecium gossypii (strain ATCC 10895 / CBS 109.51 / FGSC 9923 / NRRL Y-1056) (Yeast).